The chain runs to 372 residues: Putative glutamate--cysteine ligase 2 (372 aa).

It belongs to the glutamate--cysteine ligase type 2 family. YbdK subfamily. Homodimer.

The catalysed reaction is L-cysteine + L-glutamate + ATP = gamma-L-glutamyl-L-cysteine + ADP + phosphate + H(+). Functionally, ATP-dependent carboxylate-amine ligase which exhibits weak glutamate--cysteine ligase activity. This chain is Putative glutamate--cysteine ligase 2 (ybdK), found in Salmonella paratyphi A (strain AKU_12601).